The chain runs to 211 residues: Uracil phosphoribosyltransferase (211 aa).

Residues R79, R104, and 131 to 139 (DPMLATGGS) each bind 5-phospho-alpha-D-ribose 1-diphosphate. Uracil contacts are provided by residues I196 and 201–203 (GDA). D202 lines the 5-phospho-alpha-D-ribose 1-diphosphate pocket.

Belongs to the UPRTase family. It depends on Mg(2+) as a cofactor.

It catalyses the reaction UMP + diphosphate = 5-phospho-alpha-D-ribose 1-diphosphate + uracil. Its pathway is pyrimidine metabolism; UMP biosynthesis via salvage pathway; UMP from uracil: step 1/1. Its activity is regulated as follows. Allosterically activated by GTP. Its function is as follows. Catalyzes the conversion of uracil and 5-phospho-alpha-D-ribose 1-diphosphate (PRPP) to UMP and diphosphate. This is Uracil phosphoribosyltransferase from Lactococcus lactis subsp. cremoris (strain MG1363).